We begin with the raw amino-acid sequence, 230 residues long: Ribonuclease 3 (230 aa).

Residues 6-135 (VSELRARYGI…FNGALFLDQG (130 aa)) enclose the RNase III domain. Glu-48 contacts Mg(2+). Residue Asp-52 is part of the active site. 2 residues coordinate Mg(2+): Asp-121 and Glu-124. Glu-124 is a catalytic residue. The DRBM domain occupies 161–230 (DYKTNLQEFL…AKKALEQLKA (70 aa)).

The protein belongs to the ribonuclease III family. As to quaternary structure, homodimer. Requires Mg(2+) as cofactor.

The protein resides in the cytoplasm. The enzyme catalyses Endonucleolytic cleavage to 5'-phosphomonoester.. In terms of biological role, digests double-stranded RNA. Involved in the processing of primary rRNA transcript to yield the immediate precursors to the large and small rRNAs (23S and 16S). Processes some mRNAs, and tRNAs when they are encoded in the rRNA operon. Processes pre-crRNA and tracrRNA of type II CRISPR loci if present in the organism. This is Ribonuclease 3 from Latilactobacillus sakei subsp. sakei (strain 23K) (Lactobacillus sakei subsp. sakei).